Reading from the N-terminus, the 384-residue chain is Acetylgalactosaminyl-O-glycosyl-glycoprotein beta-1,3-N-acetylglucosaminyltransferase (384 aa).

Topologically, residues 1–12 (MAFPCRRSLTAK) are cytoplasmic. Residues 13–31 (TLACLLVGVSFLALQQWFL) form a helical; Signal-anchor for type II membrane protein membrane-spanning segment. At 32-384 (QAPRSPREER…LSCDRGHRVS (353 aa)) the chain is on the lumenal side. The tract at residues 34 to 68 (PRSPREERSPQEETPEGPTDAPAADEPPSELVPGP) is disordered. N-linked (GlcNAc...) asparagine glycans are attached at residues Asn-73, Asn-77, and Asn-196.

The protein belongs to the glycosyltransferase 31 family. In terms of tissue distribution, present in stomach and colon (at protein level). Restricted in the stomach, colon and small intestine, where core 3 structure is present.

Its subcellular location is the golgi apparatus membrane. The catalysed reaction is a 3-O-[N-acetyl-alpha-D-galactosaminyl]-L-threonyl-[protein] + UDP-N-acetyl-alpha-D-glucosamine = a 3-O-[N-acetyl-beta-D-glucosaminyl-(1-&gt;3)-N-acetyl-alpha-D-galactosaminyl]-L-threonyl-[protein] + UDP + H(+). The enzyme catalyses a 3-O-[N-acetyl-alpha-D-galactosaminyl]-L-seryl-[protein] + UDP-N-acetyl-alpha-D-glucosamine = 3-O-[N-acetyl-beta-D-glucosaminyl-(1-&gt;3)-N-acetyl-alpha-D-galactosaminyl]-L-seryl-[protein] + UDP + H(+). It participates in protein modification; protein glycosylation. Beta-1,3-N-acetylglucosaminyltransferase that synthesizes the core 3 structure of the O-glycan, an important precursor in the biosynthesis of mucin-type glycoproteins. Plays an important role in the synthesis of mucin-type O-glycans in digestive organs. The sequence is that of Acetylgalactosaminyl-O-glycosyl-glycoprotein beta-1,3-N-acetylglucosaminyltransferase (B3GNT6) from Homo sapiens (Human).